Consider the following 365-residue polypeptide: Transcription elongation factor, mitochondrial (365 aa).

The transit peptide at 1-40 directs the protein to the mitochondrion; it reads MAWRANLACLIKAGGRTRWFPLPEYLSMSPVLHNTCSRRK.

This sequence belongs to the TEFM family. In terms of assembly, interacts with POLRMT.

The protein resides in the mitochondrion matrix. Its subcellular location is the mitochondrion nucleoid. In terms of biological role, transcription elongation factor which increases mitochondrial RNA polymerase processivity. Regulates transcription of the mitochondrial genome, including genes important for the oxidative phosphorylation machinery. The protein is Transcription elongation factor, mitochondrial (Tefm) of Rattus norvegicus (Rat).